The following is a 172-amino-acid chain: Protein-export protein SecB (172 aa).

The protein belongs to the SecB family. Homotetramer, a dimer of dimers. One homotetramer interacts with 1 SecA dimer.

It localises to the cytoplasm. Its function is as follows. One of the proteins required for the normal export of preproteins out of the cell cytoplasm. It is a molecular chaperone that binds to a subset of precursor proteins, maintaining them in a translocation-competent state. It also specifically binds to its receptor SecA. In Cupriavidus pinatubonensis (strain JMP 134 / LMG 1197) (Cupriavidus necator (strain JMP 134)), this protein is Protein-export protein SecB.